Consider the following 566-residue polypeptide: Deformed epidermal autoregulatory factor 1 homolog (566 aa).

2 disordered regions span residues 33–62 (AESE…ETRR) and 163–191 (GLKG…KGGT). Residues 170-182 (PLTPGPQSPPTPL) are compositionally biased toward pro residues. At T172 the chain carries Phosphothreonine. S177 is modified (phosphoserine). Position 180 is a phosphothreonine (T180). In terms of domain architecture, SAND spans 194–274 (NWDPSVYDSE…QCLIQDGILN (81 aa)). A Nuclear localization signal motif is present at residues 300 to 306 (PYKRRKK). The segment at 404-479 (IAPFPEAALP…QLKTLFEQAK (76 aa)) is interaction with LMO4. T433 carries the post-translational modification Phosphothreonine. 2 positions are modified to phosphoserine: S444 and S449. Zn(2+)-binding residues include C505, C508, C516, C519, C525, C529, H537, and C541. The MYND-type zinc finger occupies 505-541 (CVNCGREAMSECTGCHKVNYCSTFCQRKDWKDHQHVC).

As to quaternary structure, homodimer. Isoform 1 and isoform 2 may form a heterodimer. May interact with the corepressors NCOR1 and NCRO2. Identified in a complex with XRCC5 and XRCC6. Interacts (via the SAND domain) with the DNA-PK complex subunit XRCC6; the interaction is direct with XRCC6 and may be inhibited by DNA-binding. Interacts with LMO4; LMO4 blocks export from nucleus. Interacts with LMO2 and CLIM2. Post-translationally, may be phosphorylated by DNA-PK complex in a DNA independent manner (in vitro). Ubiquitously expressed during embryogenesis, with higher expression in regions of the central nervous system, dorsal root ganglia, submandibular gland, epidermis and breast. In 12-week-old NOD mice, expression of isoform 2 is sevenfold higher in lymph node stromal elements than in T-cells and tenfold higher than in B-cells.

The protein resides in the nucleus. Its subcellular location is the cytoplasm. Its function is as follows. Transcription factor that binds to sequence with multiple copies of 5'-TTC[CG]G-3' present in its own promoter and that of the HNRPA2B1 gene. Down-regulates transcription of these genes. Binds to the retinoic acid response element (RARE) 5'-AGGGTTCACCGAAAGTTCA-3'. Activates the proenkephalin gene independently of promoter binding, probably through protein-protein interaction. Regulates epithelial cell proliferation and side-branching in the mammary gland. Required for neural tube closure and skeletal patterning. Controls the expression of peripheral tissue antigens in pancreatic lymph nodes. Isoform 1 displays greater transcriptional activity than isoform 2. Isoform 2 may inhibit transcriptional activity of isoform 1 by interacting with it and retaining it in the cytoplasm. Transcriptional activator of EIF4G3. May also involved in behavior. The protein is Deformed epidermal autoregulatory factor 1 homolog (Deaf1) of Mus musculus (Mouse).